Reading from the N-terminus, the 42-residue chain is Pollen allergen Sal k 1 (42 aa).

The chain is Pollen allergen Sal k 1 from Kali turgidum (Prickly saltwort).